We begin with the raw amino-acid sequence, 445 residues long: Exodeoxyribonuclease 7 large subunit (445 aa).

This sequence belongs to the XseA family. In terms of assembly, heterooligomer composed of large and small subunits.

Its subcellular location is the cytoplasm. The catalysed reaction is Exonucleolytic cleavage in either 5'- to 3'- or 3'- to 5'-direction to yield nucleoside 5'-phosphates.. In terms of biological role, bidirectionally degrades single-stranded DNA into large acid-insoluble oligonucleotides, which are then degraded further into small acid-soluble oligonucleotides. This is Exodeoxyribonuclease 7 large subunit from Limosilactobacillus reuteri (strain DSM 20016) (Lactobacillus reuteri).